The sequence spans 119 residues: Ribonuclease P protein component (119 aa).

It belongs to the RnpA family. As to quaternary structure, consists of a catalytic RNA component (M1 or rnpB) and a protein subunit.

It catalyses the reaction Endonucleolytic cleavage of RNA, removing 5'-extranucleotides from tRNA precursor.. Its function is as follows. RNaseP catalyzes the removal of the 5'-leader sequence from pre-tRNA to produce the mature 5'-terminus. It can also cleave other RNA substrates such as 4.5S RNA. The protein component plays an auxiliary but essential role in vivo by binding to the 5'-leader sequence and broadening the substrate specificity of the ribozyme. The chain is Ribonuclease P protein component from Streptococcus gordonii (strain Challis / ATCC 35105 / BCRC 15272 / CH1 / DL1 / V288).